We begin with the raw amino-acid sequence, 426 residues long: tRNA(Met) cytidine acetate ligase (426 aa).

ATP contacts are provided by residues 7-20 (VVEY…HLFH), Gly-101, Asn-168, and Arg-193.

This sequence belongs to the TmcAL family.

It is found in the cytoplasm. It carries out the reaction cytidine(34) in elongator tRNA(Met) + acetate + ATP = N(4)-acetylcytidine(34) in elongator tRNA(Met) + AMP + diphosphate. In terms of biological role, catalyzes the formation of N(4)-acetylcytidine (ac(4)C) at the wobble position of elongator tRNA(Met), using acetate and ATP as substrates. First activates an acetate ion to form acetyladenylate (Ac-AMP) and then transfers the acetyl group to tRNA to form ac(4)C34. The protein is tRNA(Met) cytidine acetate ligase of Kosmotoga olearia (strain ATCC BAA-1733 / DSM 21960 / TBF 19.5.1).